The sequence spans 191 residues: Prostaglandin-H2 D-isomerase (191 aa).

The signal sequence occupies residues 1-24; sequence MAALHTLWMGLVLLGVLGVLQTRA. At Q25 the chain carries Pyrrolidone carboxylic acid. An N-linked (GlcNAc...) asparagine glycan is attached at N51. The Nucleophile role is filled by C65. N-linked (GlcNAc...) asparagine glycosylation occurs at N78. Cysteines 89 and 186 form a disulfide.

It belongs to the calycin superfamily. Lipocalin family. Monomer. N- and O-glycosylated. Both N-glycosylation recognition sites are almost quantitatively occupied by N-glycans of the biantennary complex type, with a considerable proportion of structures bearing a bisecting GlcNAc. N-glycan at Asn-78: dHex1Hex5HexNAc4. Agalacto structure as well as sialylated and nonsialylated oligosaccharides bearing alpha2-3- and/or alpha2-6-linked NeuNAc are present.

It localises to the rough endoplasmic reticulum. It is found in the nucleus membrane. Its subcellular location is the golgi apparatus. The protein resides in the cytoplasm. The protein localises to the perinuclear region. It localises to the secreted. The catalysed reaction is prostaglandin H2 = prostaglandin D2. Catalyzes the conversion of PGH2 to PGD2, a prostaglandin involved in smooth muscle contraction/relaxation and a potent inhibitor of platelet aggregation. Involved in a variety of CNS functions, such as sedation, NREM sleep and PGE2-induced allodynia, and may have an anti-apoptotic role in oligodendrocytes. Binds small non-substrate lipophilic molecules, including biliverdin, bilirubin, retinal, retinoic acid and thyroid hormone, and may act as a scavenger for harmful hydrophobic molecules and as a secretory retinoid and thyroid hormone transporter. Possibly involved in development and maintenance of the blood-brain, blood-retina, blood-aqueous humor and blood-testis barrier. It is likely to play important roles in both maturation and maintenance of the central nervous system and male reproductive system. Involved in PLA2G3-dependent maturation of mast cells. PLA2G3 is secreted by immature mast cells and acts on nearby fibroblasts upstream to PTDGS to synthesize PGD2, which in turn promotes mast cell maturation and degranulation via PTGDR. This chain is Prostaglandin-H2 D-isomerase (PTGDS), found in Felis catus (Cat).